The chain runs to 317 residues: Beta-ketoacyl-[acyl-carrier-protein] synthase III (317 aa).

Active-site residues include Cys112 and His244. Residues 245–249 are ACP-binding; that stretch reads QANLR. The active site involves Asn274.

The protein belongs to the thiolase-like superfamily. FabH family. As to quaternary structure, homodimer.

Its subcellular location is the cytoplasm. It carries out the reaction malonyl-[ACP] + acetyl-CoA + H(+) = 3-oxobutanoyl-[ACP] + CO2 + CoA. It functions in the pathway lipid metabolism; fatty acid biosynthesis. Functionally, catalyzes the condensation reaction of fatty acid synthesis by the addition to an acyl acceptor of two carbons from malonyl-ACP. Catalyzes the first condensation reaction which initiates fatty acid synthesis and may therefore play a role in governing the total rate of fatty acid production. Possesses both acetoacetyl-ACP synthase and acetyl transacylase activities. Its substrate specificity determines the biosynthesis of branched-chain and/or straight-chain of fatty acids. The polypeptide is Beta-ketoacyl-[acyl-carrier-protein] synthase III (Enterobacter sp. (strain 638)).